The sequence spans 122 residues: Large ribosomal subunit protein uL18 (122 aa).

It belongs to the universal ribosomal protein uL18 family. As to quaternary structure, part of the 50S ribosomal subunit; part of the 5S rRNA/L5/L18/L25 subcomplex. Contacts the 5S and 23S rRNAs.

In terms of biological role, this is one of the proteins that bind and probably mediate the attachment of the 5S RNA into the large ribosomal subunit, where it forms part of the central protuberance. The sequence is that of Large ribosomal subunit protein uL18 from Leptospira borgpetersenii serovar Hardjo-bovis (strain JB197).